Consider the following 393-residue polypeptide: NAD(P)H-quinone oxidoreductase subunit H, chloroplastic (393 aa).

This sequence belongs to the complex I 49 kDa subunit family. As to quaternary structure, NDH is composed of at least 16 different subunits, 5 of which are encoded in the nucleus.

The protein localises to the plastid. It is found in the chloroplast thylakoid membrane. The catalysed reaction is a plastoquinone + NADH + (n+1) H(+)(in) = a plastoquinol + NAD(+) + n H(+)(out). It carries out the reaction a plastoquinone + NADPH + (n+1) H(+)(in) = a plastoquinol + NADP(+) + n H(+)(out). Its function is as follows. NDH shuttles electrons from NAD(P)H:plastoquinone, via FMN and iron-sulfur (Fe-S) centers, to quinones in the photosynthetic chain and possibly in a chloroplast respiratory chain. The immediate electron acceptor for the enzyme in this species is believed to be plastoquinone. Couples the redox reaction to proton translocation, and thus conserves the redox energy in a proton gradient. The chain is NAD(P)H-quinone oxidoreductase subunit H, chloroplastic from Daucus carota (Wild carrot).